Here is a 453-residue protein sequence, read N- to C-terminus: Protein vestigial (453 aa).

The segment at 145 to 279 is disordered; the sequence is AAGHSLHSSH…GGGLAGSGQG (135 aa). The span at 151 to 177 shows a compositional bias: basic residues; the sequence is HSSHRTHAHSLAHAHTHPHSHTHTHTH. The segment covering 178-193 has biased composition (basic and acidic residues); sequence QTKEEDLIVPRSEAEA. Gly residues-rich tracts occupy residues 227–253 and 267–278; these read HGGG…GGTG and GSGGGGLAGSGQ. A ser-rich sd binding domain region spans residues 279–335; sequence GQAQYLSASCVVFTNYSGDTASQVDEHFSRALNYNNKDSKESSSPMSNRNFPPSFWN.

As to quaternary structure, the Ser-rich protein domain within the C-terminal region interacts with the C-terminus of sd to form a complex which acts as a selector for wing development. Interacts with Dhfr. As to expression, expressed in the developing wing primordia initially along the D/V wing boundary, and by the late third larval instar, maximal expression is seen in cells at the D/V wing disk boundary. Less expression is seen in cells located farther from this boundary.

It localises to the nucleus. In terms of biological role, involved in determining which thoracic imaginal disk cells will form wings and halteres, perhaps by interacting with other nuclear regulatory proteins. When in combination with scalloped (sd), it acts as a transcriptional activation complex that regulates gene expression in the wing. Binding to sd switches the DNA target selectivity of sd. Required and sufficient for cell proliferation at the dorsal/ventral (D/V) boundary of the wing imaginal disk. Also required for cell proliferation in the wing imaginal disk, mediated via activation of E2f. By interacting with Dhfr, may control genes involved in DNA replication. The sequence is that of Protein vestigial (vg) from Drosophila melanogaster (Fruit fly).